The chain runs to 486 residues: Putative protease Do-like 13 (486 aa).

A serine protease region spans residues 44–229; that stretch reads KINTFSSKPN…IPAPVVKHFI (186 aa). Catalysis depends on charge relay system residues H83, D114, and S192. One can recognise a PDZ domain in the interval 241-334; that stretch reads FCSLNLSYQH…TILLKILREG (94 aa).

Belongs to the peptidase S1C family.

In terms of biological role, putative serine protease. The chain is Putative protease Do-like 13 (DEGP13) from Arabidopsis thaliana (Mouse-ear cress).